Consider the following 196-residue polypeptide: Xanthine phosphoribosyltransferase (196 aa).

Xanthine contacts are provided by L20 and N27. 128–132 (ATGAA) lines the 5-phospho-alpha-D-ribose 1-diphosphate pocket. Residue K156 coordinates xanthine.

This sequence belongs to the purine/pyrimidine phosphoribosyltransferase family. Xpt subfamily. In terms of assembly, homodimer.

It is found in the cytoplasm. The catalysed reaction is XMP + diphosphate = xanthine + 5-phospho-alpha-D-ribose 1-diphosphate. Its pathway is purine metabolism; XMP biosynthesis via salvage pathway; XMP from xanthine: step 1/1. Converts the preformed base xanthine, a product of nucleic acid breakdown, to xanthosine 5'-monophosphate (XMP), so it can be reused for RNA or DNA synthesis. This Brevibacillus brevis (strain 47 / JCM 6285 / NBRC 100599) protein is Xanthine phosphoribosyltransferase.